The sequence spans 1177 residues: Solute carrier family 9 member C1 (1177 aa).

Over 1–17 (MAGIFKEFFFSTEDLPE) the chain is Extracellular. Residues 18–37 (VILTLSLISSIGAFLNRHLE) form a helical membrane-spanning segment. Topologically, residues 38–42 (DFPIP) are cytoplasmic. Residues 43-60 (VPVILFLLGCSFEVLSFT) form a helical membrane-spanning segment. At 61–76 (SSQVQRYANAIQWMSP) the chain is on the extracellular side. The chain crosses the membrane as a helical span at residues 77–93 (DLFFRIFTPVVFFTTAF). Residues 94–103 (DMDTYMLQKL) are Cytoplasmic-facing. The chain crosses the membrane as a helical span at residues 104 to 129 (FWQILLISIPGFLVNYILVLWHLASV). Residues 104 to 191 (FWQILLISIP…SLITFTSIMD (88 aa)) are transport core domain. Residues 130–135 (NQLLLK) lie on the Extracellular side of the membrane. A helical transmembrane segment spans residues 136-161 (PTQWLLFSAILVSSDPMLTAAAIRDL). Over 162–164 (GLS) the chain is Cytoplasmic. A helical membrane pass occupies residues 165 to 190 (RSLISLINGESLMTSVISLITFTSIM). Topologically, residues 191-204 (DFDQRLQSKRNHTL) are extracellular. The helical transmembrane segment at 205–236 (AEEIVGGICSYIIASFLFGILSSKLIQFWMST) threads the bilayer. Topologically, residues 237–240 (VFGD) are cytoplasmic. A helical membrane pass occupies residues 241–262 (DVNHISLIFSILYLIFYICELV). Residues 263–265 (GMS) lie on the Extracellular side of the membrane. A helical membrane pass occupies residues 266 to 279 (GIFTLAIVGLLLNS). Residues 280–286 (TSFKAAI) are Cytoplasmic-facing. A helical transmembrane segment spans residues 287-319 (EETLLLEFWTFLSRIAFLMVFTFFGLLIPAHTY). The Extracellular portion of the chain corresponds to 320-324 (LYIEF). A helical membrane pass occupies residues 325–354 (VDIYYSLNIYLTLIVLRFLTLLLISPVLSR). A transport core domain region spans residues 325 to 426 (VDIYYSLNIY…FILPVAVTIL (102 aa)). Residues 355–360 (VGHEFS) are Cytoplasmic-facing. The chain crosses the membrane as a helical span at residues 361–391 (WRWIFIMVCSEMKGMPNINMALLLAYSDLYF). Residues 392–395 (GSDK) are Extracellular-facing. Residues 396–426 (EKSQILFHGVLVCLITLVVNRFILPVAVTIL) traverse the membrane as a helical segment. Topologically, residues 427–612 (GLRDATSTKY…ICHTIVFTEE (186 aa)) are cytoplasmic. Residues 598 to 678 (YFFFRICHTI…DFFSHAWNIF (81 aa)) form an ion transport-like region. Residues 613 to 633 (FEHVGYLVILMNIFPFIISWI) form a helical membrane-spanning segment. At 634–637 (SQLN) the chain is on the extracellular side. A helical membrane pass occupies residues 638-664 (VIYHSELKHTNYCFLTLYILEALLKIA). The Cytoplasmic portion of the chain corresponds to 665–671 (AMRKDFF). A helical transmembrane segment spans residues 672–696 (SHAWNIFELAITLIGILHVILIEID). At 697 to 704 (TIKYIFNE) the chain is on the extracellular side. The chain crosses the membrane as a helical span at residues 705 to 731 (TEVIVFIKVVQFFRILRIFKLIAPKLL). The Cytoplasmic portion of the chain corresponds to 732–1177 (QIIDKRMSHQ…RINLRKVRKE (446 aa)).

This sequence belongs to the monovalent cation:proton antiporter 1 (CPA1) transporter (TC 2.A.36) family. In terms of assembly, interacts with soluble adenylyl cyclase (sAC). Sperm.

It localises to the cell projection. The protein localises to the cilium. The protein resides in the flagellum membrane. In terms of biological role, sperm-specific solute carrier involved in intracellular pH regulation of spermatozoa. Required for sperm motility and fertility. Involved in sperm cell hyperactivation, a step needed for sperm motility which is essential late in the preparation of sperm for fertilization. Required for the expression and bicarbonate regulation of the soluble adenylyl cyclase (sAC). This chain is Solute carrier family 9 member C1 (SLC9C1), found in Homo sapiens (Human).